Here is a 542-residue protein sequence, read N- to C-terminus: Apolipoprotein N-acyltransferase (542 aa).

Transmembrane regions (helical) follow at residues 24-44, 54-74, 85-105, 116-136, 160-180, and 190-210; these read VVASVVSCICGYSLLWAGLFA, VWCIAFIWTWTVEGAHFSWML, FVWGILLSYLATLFASFSCLV, ALVWLPGVWVAIEAIRYYGLL, FFGWAGQSFLVIAANICCFAV, and GLWLTLCAFPYLLGGAHYEYL. Residues 220-499 enclose the CN hydrolase domain; sequence LRVAIVQPGY…TGVLQVSVPL (280 aa). The active-site Proton acceptor is Glu-264. Lys-349 is a catalytic residue. Cys-404 functions as the Nucleophile in the catalytic mechanism. The helical transmembrane segment at 509-529 threads the bilayer; the sequence is LGDAPLLLIAVCSVIGAIAYF.

Belongs to the CN hydrolase family. Apolipoprotein N-acyltransferase subfamily.

It localises to the cell inner membrane. The catalysed reaction is N-terminal S-1,2-diacyl-sn-glyceryl-L-cysteinyl-[lipoprotein] + a glycerophospholipid = N-acyl-S-1,2-diacyl-sn-glyceryl-L-cysteinyl-[lipoprotein] + a 2-acyl-sn-glycero-3-phospholipid + H(+). It functions in the pathway protein modification; lipoprotein biosynthesis (N-acyl transfer). Catalyzes the phospholipid dependent N-acylation of the N-terminal cysteine of apolipoprotein, the last step in lipoprotein maturation. The sequence is that of Apolipoprotein N-acyltransferase from Chlamydia trachomatis serovar D (strain ATCC VR-885 / DSM 19411 / UW-3/Cx).